The primary structure comprises 117 residues: SPbeta prophage-derived uncharacterized protein YosL (117 aa).

This Bacillus subtilis (strain 168) protein is SPbeta prophage-derived uncharacterized protein YosL (yosL).